Here is a 164-residue protein sequence, read N- to C-terminus: Disulfide bond formation protein B (164 aa).

Over 1–4 (MRII) the chain is Cytoplasmic. A helical membrane pass occupies residues 5–21 (FLLIALICAGLVSYALY). Topologically, residues 22-39 (LQLADGLLPCPLCIFQRM) are periplasmic. An intrachain disulfide couples Cys31 to Cys34. A helical transmembrane segment spans residues 40-56 (AYWLVGITALFAFIHHP). The Cytoplasmic segment spans residues 57–62 (QRLGRR). A helical transmembrane segment spans residues 63-80 (IYCGLIILFSLAGAIVAG). Residues 81–136 (RQAWLVRFPEAFECGISPEEAFLNELPLARWWPDMFEANGDCTDGTWQFLSLTIPD) lie on the Periplasmic side of the membrane. Cys94 and Cys122 are oxidised to a cystine. Residues 137 to 155 (WSLLIFLAFSLIAGLLWRS) form a helical membrane-spanning segment. Residues 156–164 (RSISSSNLK) are Cytoplasmic-facing.

It belongs to the DsbB family.

The protein resides in the cell inner membrane. Functionally, required for disulfide bond formation in some periplasmic proteins. Acts by oxidizing the DsbA protein. The polypeptide is Disulfide bond formation protein B (Nitrosomonas europaea (strain ATCC 19718 / CIP 103999 / KCTC 2705 / NBRC 14298)).